A 1614-amino-acid chain; its full sequence is Chitin synthase csmA (1614 aa).

Positions 1 to 22 (MAGPAPSGRTPSHAQSSLPSLP) are disordered. Residues 1–788 (MAGPAPSGRT…CWADLAKLGE (788 aa)) enclose the Myosin motor domain. Residues 9–19 (RTPSHAQSSLP) are compositionally biased toward polar residues. ATP is bound at residue 105–112 (GESGSGKT). The segment at 600–650 (QVSSKPMRMPSMARRKAGPSRLAFDAPEGDDQDEYDSQAGSMSKSSARRKS) is disordered. A compositionally biased stretch (acidic residues) spans 626-635 (PEGDDQDEYD). Positions 668-692 (LDIVSKCLNSANLNPYFVFCLKPND) are actin-binding. 2 consecutive transmembrane segments (helical) span residues 898-918 (WMAI…KTFG) and 937-957 (LIIW…PGLI). The region spanning 961-1020 (QHVYSTAELSSHNGKDGHNSFVAIRGIVFNLDKFMPSHYPDIVPEKSLKKYAGTDATGLF) is the Cytochrome b5 heme-binding domain. Residues Asn1047 and Asn1072 are each glycosylated (N-linked (GlcNAc...) asparagine). The chain crosses the membrane as a helical span at residues 1209–1229 (FILAISIFICLIVVFKFLAAL). N-linked (GlcNAc...) asparagine glycosylation occurs at Asn1572.

In the N-terminal section; belongs to the TRAFAC class myosin-kinesin ATPase superfamily. Myosin family. It in the C-terminal section; belongs to the chitin synthase family. Class V subfamily.

The protein resides in the cell membrane. The protein localises to the cell septum. It is found in the cell tip. The catalysed reaction is [(1-&gt;4)-N-acetyl-beta-D-glucosaminyl](n) + UDP-N-acetyl-alpha-D-glucosamine = [(1-&gt;4)-N-acetyl-beta-D-glucosaminyl](n+1) + UDP + H(+). In terms of biological role, polymerizes chitin, a structural polymer of the cell wall and septum, by transferring the sugar moiety of UDP-GlcNAc to the non-reducing end of the growing chitin polymer. Acts as the major chitin synthase in Aspergillus niger involved in cell wall integrity which is principally responsible for chitin synthesis at the lateral cell wall. Plays an important role in septal growth or maintenance. Mediates colony spore formation. The sequence is that of Chitin synthase csmA from Aspergillus niger (strain ATCC MYA-4892 / CBS 513.88 / FGSC A1513).